We begin with the raw amino-acid sequence, 1456 residues long: DNA polymerase gamma, mitochondrial (1456 aa).

The transit peptide at 1–41 directs the protein to the mitochondrion; sequence MLTPVRCRTVPNATVATAARVLRRANLFSRYPRQLGHLRWD. 2 disordered regions span residues 1200 to 1266 and 1308 to 1443; these read APEM…SLDD and AVTT…SWKP. A compositionally biased stretch (low complexity) spans 1204 to 1239; that stretch reads AAVPSTSSESKSKASATTSTTTTENATASPSSSSNV. Residues 1315–1325 show a composition bias toward pro residues; the sequence is PEPPTNPPPVA. Low complexity-rich tracts occupy residues 1346-1371 and 1411-1428; these read PKNP…TPKP and TASV…ATAT.

This sequence belongs to the DNA polymerase type-A family. Requires Mg(2+) as cofactor.

Its subcellular location is the mitochondrion. The enzyme catalyses DNA(n) + a 2'-deoxyribonucleoside 5'-triphosphate = DNA(n+1) + diphosphate. Involved in the replication of mitochondrial DNA. This Neurospora crassa (strain ATCC 24698 / 74-OR23-1A / CBS 708.71 / DSM 1257 / FGSC 987) protein is DNA polymerase gamma, mitochondrial (mip-1).